Here is a 247-residue protein sequence, read N- to C-terminus: MISDINALKYKALKYKKVLLKVSGEALMGDKQFGHEYDIIKKIAIDIKEVIALGVEVAIVVGGGNIYRGINAALVGMDRASADYIGMLATVINALTLQNVMESLNIYTRVLSAIPMMSVCEPYIRRKAKRHMEKKRVVIFAGGTGNPFCTTDSAAVLRAIEMNCDILLKATQVDGVYDSDPKKNPDAKKYFTISYKDVITNNLQVMDTAAIAVARENKLPIRVFSIKEQGNFARVIQDKGEYTAIEE.

Position 21 to 24 (21 to 24 (KVSG)) interacts with ATP. G63 contributes to the UMP binding site. The ATP site is built by G64 and R68. UMP is bound by residues D83 and 144–151 (TGNPFCTT). The ATP site is built by T171, Q172, Y177, and D180.

Belongs to the UMP kinase family. In terms of assembly, homohexamer.

Its subcellular location is the cytoplasm. It catalyses the reaction UMP + ATP = UDP + ADP. It participates in pyrimidine metabolism; CTP biosynthesis via de novo pathway; UDP from UMP (UMPK route): step 1/1. With respect to regulation, inhibited by UTP. Functionally, catalyzes the reversible phosphorylation of UMP to UDP. In Rickettsia rickettsii (strain Sheila Smith), this protein is Uridylate kinase.